The chain runs to 200 residues: Small ribosomal subunit protein uS4 (200 aa).

In terms of domain architecture, S4 RNA-binding spans 92-155; the sequence is SRLDAVVYSL…QKLNVIVESV (64 aa).

The protein belongs to the universal ribosomal protein uS4 family. In terms of assembly, part of the 30S ribosomal subunit. Contacts protein S5. The interaction surface between S4 and S5 is involved in control of translational fidelity.

Functionally, one of the primary rRNA binding proteins, it binds directly to 16S rRNA where it nucleates assembly of the body of the 30S subunit. In terms of biological role, with S5 and S12 plays an important role in translational accuracy. The chain is Small ribosomal subunit protein uS4 from Staphylococcus aureus (strain MRSA252).